The primary structure comprises 102 residues: Large ribosomal subunit protein bL21 (102 aa).

The protein belongs to the bacterial ribosomal protein bL21 family. Part of the 50S ribosomal subunit. Contacts protein L20.

Its function is as follows. This protein binds to 23S rRNA in the presence of protein L20. The polypeptide is Large ribosomal subunit protein bL21 (Clavibacter sepedonicus (Clavibacter michiganensis subsp. sepedonicus)).